The sequence spans 1368 residues: Protein suppressor 2 of zeste (1368 aa).

The segment at 35–74 (CRLCRGYMIDPTTVDYCYHTYCRSCILKHLLRAVYCPECK) adopts an RING-type zinc-finger fold. Disordered regions lie at residues 245-321 (SRIN…FKSL), 448-628 (QPLQ…QQQQ), 640-718 (TLPT…AVPQ), 861-903 (AGGK…KRSC), 935-1001 (ALSG…NGTA), 1057-1103 (SANP…STSN), 1116-1141 (ISAN…GDDL), 1161-1193 (AASS…ASVR), 1211-1271 (STAA…KKPT), and 1298-1322 (VLSS…RPEP). Positions 449–461 (PLQQSASNPDSKY) are enriched in polar residues. Positions 462–495 (SPNASPMSSCSSSTNGSSSSLGTADASTSTSTSS) are enriched in low complexity. The segment covering 496–506 (SHRKRKKKHSK) has biased composition (basic residues). 2 stretches are compositionally biased toward low complexity: residues 599–628 (AEPE…QQQQ) and 672–689 (PKQQ…VLQQ). Composition is skewed to polar residues over residues 936–953 (LSGQ…NAYR) and 962–977 (LRNT…SKSS). Composition is skewed to low complexity over residues 1078-1099 (NNNN…NNNN), 1119-1138 (NSNG…TTNG), 1161-1183 (AASS…NANA), and 1231-1263 (STSN…ATSP).

The protein localises to the nucleus. Its function is as follows. Regulates expression of the homeotic selector genes by influencing higher-order chromatin structure through interaction with other proteins. The protein is Protein suppressor 2 of zeste (Su(z)2) of Drosophila melanogaster (Fruit fly).